The following is a 109-amino-acid chain: Sperm-specific class P protein 19 (109 aa).

The 109-residue stretch at 1–109 folds into the MSP domain; it reads MSLTADPPAC…TVTIPMSATA (109 aa).

As to quaternary structure, monomer. Expressed at higher level in testis.

The chain is Sperm-specific class P protein 19 (ssp-19) from Caenorhabditis elegans.